Here is a 332-residue protein sequence, read N- to C-terminus: NH(3)-dependent NAD(+) synthetase (332 aa).

Gly-48–Ser-55 serves as a coordination point for ATP. Asp-54 contributes to the Mg(2+) binding site. Arg-184 provides a ligand contact to deamido-NAD(+). Position 204 (Thr-204) interacts with ATP. Glu-209 serves as a coordination point for Mg(2+). Lys-217 and Asp-224 together coordinate deamido-NAD(+). Residues Lys-233 and Thr-255 each contribute to the ATP site.

It belongs to the NAD synthetase family. Homodimer.

The enzyme catalyses deamido-NAD(+) + NH4(+) + ATP = AMP + diphosphate + NAD(+) + H(+). It participates in cofactor biosynthesis; NAD(+) biosynthesis; NAD(+) from deamido-NAD(+) (ammonia route): step 1/1. In terms of biological role, catalyzes the ATP-dependent amidation of deamido-NAD to form NAD. Uses ammonia as a nitrogen source. The chain is NH(3)-dependent NAD(+) synthetase from Rhizobium rhizogenes (strain K84 / ATCC BAA-868) (Agrobacterium radiobacter).